Here is a 320-residue protein sequence, read N- to C-terminus: Ferrochelatase (320 aa).

The Fe cation site is built by histidine 194 and glutamate 275.

This sequence belongs to the ferrochelatase family. As to quaternary structure, monomer.

Its subcellular location is the cytoplasm. It carries out the reaction heme b + 2 H(+) = protoporphyrin IX + Fe(2+). The protein operates within porphyrin-containing compound metabolism; protoheme biosynthesis; protoheme from protoporphyrin-IX: step 1/1. Functionally, catalyzes the ferrous insertion into protoporphyrin IX. The protein is Ferrochelatase of Escherichia coli O139:H28 (strain E24377A / ETEC).